The following is a 597-amino-acid chain: Inactive metallocarboxypeptidase ECM14 (597 aa).

Positions 1-21 (MRLFTHGQVLALLAFVNTISA) are cleaved as a signal peptide. A propeptide spanning residues 22–174 (TPSFSTNSYP…QTIYESYPSP (153 aa)) is cleaved from the precursor. The segment covering 170-179 (SYPSPSQSPS) has biased composition (low complexity). The interval 170 to 189 (SYPSPSQSPSGRERGFLPSG) is disordered. Residues 202-522 (NYQPLSVIVP…NAVMMLGRFL (321 aa)) enclose the Peptidase M14 domain. Residues His264 and Glu267 each coordinate Zn(2+). Substrate contacts are provided by residues 264–267 (HARE), Arg322, and 339–340 (DR). Cys333 and Cys356 are oxidised to a cystine. N-linked (GlcNAc...) asparagine glycosylation is present at Asn349. His396 serves as a coordination point for Zn(2+). 397–398 (SY) contributes to the substrate binding site. Residues 543 to 597 (KDDKPILNDDDDDDADTNDDGIGRKDDSWIPDEYKGDNDRDESDGGWAFRRLRKR) form a disordered region. The span at 550 to 561 (NDDDDDDADTND) shows a compositional bias: acidic residues. A compositionally biased stretch (basic and acidic residues) spans 563 to 580 (GIGRKDDSWIPDEYKGDN).

The protein belongs to the peptidase M14 family. Requires Zn(2+) as cofactor.

It is found in the vacuole. Its subcellular location is the secreted. Functionally, inactive carboxypeptidase that may play a role in cell wall organization and biogenesis. This Ajellomyces capsulatus (strain G186AR / H82 / ATCC MYA-2454 / RMSCC 2432) (Darling's disease fungus) protein is Inactive metallocarboxypeptidase ECM14 (ECM14).